Reading from the N-terminus, the 485-residue chain is Dynein axonemal assembly factor 3 (485 aa).

Belongs to the DNAAF3 family.

The protein resides in the cytoplasm. It is found in the dynein axonemal particle. Required for the assembly of axonemal inner and outer dynein arms. Involved in preassembly of dyneins into complexes before their transport into cilia. This chain is Dynein axonemal assembly factor 3 (dnaaf3), found in Xenopus laevis (African clawed frog).